The sequence spans 90 residues: Small cysteine-rich outer membrane protein OmcA (90 aa).

The signal sequence occupies residues 1–19 (MKKAVLIAAMFCGVVSLSS). C20 carries the N-palmitoyl cysteine lipid modification. C20 carries the S-diacylglycerol cysteine lipid modification. The tract at residues 69 to 90 (TECNSQSPQVKGCTSPDGRCKQ) is disordered.

Part of a disulfide cross-linked outer membrane complex (COMC) composed of the major outer membrane porin (MOMP), the small cysteine-rich protein (OmcA) and the large cysteine-rich periplasmic protein (OmcB).

It localises to the cell outer membrane. Its function is as follows. In elementary bodies (EBs, the infectious stage, which is able to survive outside the host cell) provides the structural integrity of the outer envelope through disulfide cross-links with the large cysteine-rich periplasmic protein and the major outer membrane porin. It has been described in publications as the Sarkosyl-insoluble COMC (Chlamydia outer membrane complex), and serves as the functional equivalent of peptidoglycan. This is Small cysteine-rich outer membrane protein OmcA (omcA) from Chlamydia pneumoniae (Chlamydophila pneumoniae).